A 363-amino-acid chain; its full sequence is Pyruvate dehydrogenase E1 component subunit beta-1, mitochondrial (363 aa).

The N-terminal 29 residues, 1–29 (MLGILRQRAIDGASTLRRTRFALVSARSY), are a transit peptide targeting the mitochondrion. E92 contributes to the thiamine diphosphate binding site. Residues I145, A193, I194, and D196 each coordinate K(+). Residues K247 and K254 each participate in a glycyl lysine isopeptide (Lys-Gly) (interchain with G-Cter in ubiquitin) cross-link.

In terms of assembly, tetramer of 2 alpha and 2 beta subunits. Thiamine diphosphate is required as a cofactor. In terms of tissue distribution, expressed in roots, immature rosettes, and mature rosettes.

Its subcellular location is the mitochondrion matrix. The enzyme catalyses N(6)-[(R)-lipoyl]-L-lysyl-[protein] + pyruvate + H(+) = N(6)-[(R)-S(8)-acetyldihydrolipoyl]-L-lysyl-[protein] + CO2. Its function is as follows. The pyruvate dehydrogenase complex catalyzes the overall conversion of pyruvate to acetyl-CoA and CO(2). It contains multiple copies of three enzymatic components: pyruvate dehydrogenase (E1), dihydrolipoamide acetyltransferase (E2) and lipoamide dehydrogenase (E3). The polypeptide is Pyruvate dehydrogenase E1 component subunit beta-1, mitochondrial (PDH2) (Arabidopsis thaliana (Mouse-ear cress)).